The sequence spans 379 residues: 3-dehydroquinate synthase (379 aa).

NAD(+)-binding positions include 67–72 (PGEKNK), 101–105 (GIILD), 125–126 (TT), K138, and K147. Positions 180, 242, and 258 each coordinate Zn(2+).

The protein belongs to the sugar phosphate cyclases superfamily. Dehydroquinate synthase family. NAD(+) is required as a cofactor. The cofactor is Co(2+). Zn(2+) serves as cofactor.

The protein localises to the cytoplasm. It carries out the reaction 7-phospho-2-dehydro-3-deoxy-D-arabino-heptonate = 3-dehydroquinate + phosphate. Its pathway is metabolic intermediate biosynthesis; chorismate biosynthesis; chorismate from D-erythrose 4-phosphate and phosphoenolpyruvate: step 2/7. Its function is as follows. Catalyzes the conversion of 3-deoxy-D-arabino-heptulosonate 7-phosphate (DAHP) to dehydroquinate (DHQ). The polypeptide is 3-dehydroquinate synthase (Chlamydia caviae (strain ATCC VR-813 / DSM 19441 / 03DC25 / GPIC) (Chlamydophila caviae)).